The sequence spans 354 residues: Uroporphyrinogen decarboxylase (354 aa).

Residues 30–34 (RQAGR), F49, D79, Y156, S211, and H326 each bind substrate.

The protein belongs to the uroporphyrinogen decarboxylase family. In terms of assembly, homodimer.

The protein resides in the cytoplasm. It carries out the reaction uroporphyrinogen III + 4 H(+) = coproporphyrinogen III + 4 CO2. Its pathway is porphyrin-containing compound metabolism; protoporphyrin-IX biosynthesis; coproporphyrinogen-III from 5-aminolevulinate: step 4/4. Catalyzes the decarboxylation of four acetate groups of uroporphyrinogen-III to yield coproporphyrinogen-III. The sequence is that of Uroporphyrinogen decarboxylase from Salinibacter ruber (strain DSM 13855 / M31).